Reading from the N-terminus, the 238-residue chain is 1-(5-phosphoribosyl)-5-[(5-phosphoribosylamino)methylideneamino] imidazole-4-carboxamide isomerase (238 aa).

The active-site Proton acceptor is Asp8. Asp130 serves as the catalytic Proton donor.

Belongs to the HisA/HisF family.

It is found in the cytoplasm. It catalyses the reaction 1-(5-phospho-beta-D-ribosyl)-5-[(5-phospho-beta-D-ribosylamino)methylideneamino]imidazole-4-carboxamide = 5-[(5-phospho-1-deoxy-D-ribulos-1-ylimino)methylamino]-1-(5-phospho-beta-D-ribosyl)imidazole-4-carboxamide. It participates in amino-acid biosynthesis; L-histidine biosynthesis; L-histidine from 5-phospho-alpha-D-ribose 1-diphosphate: step 4/9. This is 1-(5-phosphoribosyl)-5-[(5-phosphoribosylamino)methylideneamino] imidazole-4-carboxamide isomerase from Methanococcus maripaludis (strain C5 / ATCC BAA-1333).